The following is a 156-amino-acid chain: FAD synthase (156 aa).

Residues 16–17 (TF), 21–24 (HPGH), Asp101, and Tyr129 contribute to the ATP site.

The protein belongs to the archaeal FAD synthase family. Homodimer. A divalent metal cation serves as cofactor.

The enzyme catalyses FMN + ATP + H(+) = FAD + diphosphate. It functions in the pathway cofactor biosynthesis; FAD biosynthesis; FAD from FMN: step 1/1. Catalyzes the transfer of the AMP portion of ATP to flavin mononucleotide (FMN) to produce flavin adenine dinucleotide (FAD) coenzyme. This chain is FAD synthase, found in Methanococcus aeolicus (strain ATCC BAA-1280 / DSM 17508 / OCM 812 / Nankai-3).